The chain runs to 368 residues: tRNA N6-adenosine threonylcarbamoyltransferase (368 aa).

Positions 108 and 112 each coordinate Fe cation. Substrate-binding positions include 149-153 (LVSGG), D183, G196, D200, and N301. Fe cation is bound at residue D329.

It belongs to the KAE1 / TsaD family. It depends on Fe(2+) as a cofactor.

It localises to the cytoplasm. The catalysed reaction is L-threonylcarbamoyladenylate + adenosine(37) in tRNA = N(6)-L-threonylcarbamoyladenosine(37) in tRNA + AMP + H(+). In terms of biological role, required for the formation of a threonylcarbamoyl group on adenosine at position 37 (t(6)A37) in tRNAs that read codons beginning with adenine. Is involved in the transfer of the threonylcarbamoyl moiety of threonylcarbamoyl-AMP (TC-AMP) to the N6 group of A37, together with TsaE and TsaB. TsaD likely plays a direct catalytic role in this reaction. In Paenarthrobacter aurescens (strain TC1), this protein is tRNA N6-adenosine threonylcarbamoyltransferase.